The following is a 269-amino-acid chain: Shikimate dehydrogenase (NADP(+)) (269 aa).

Shikimate-binding positions include 14–16 (TLS) and Thr60. The active-site Proton acceptor is the Lys64. Asp76 lines the NADP(+) pocket. Residues Asn85 and Asp100 each contribute to the shikimate site. NADP(+) is bound by residues 122–126 (GAGGA) and Met208. Shikimate is bound at residue Tyr210. Residue Gly232 participates in NADP(+) binding.

This sequence belongs to the shikimate dehydrogenase family. As to quaternary structure, homodimer.

The catalysed reaction is shikimate + NADP(+) = 3-dehydroshikimate + NADPH + H(+). The protein operates within metabolic intermediate biosynthesis; chorismate biosynthesis; chorismate from D-erythrose 4-phosphate and phosphoenolpyruvate: step 4/7. Its function is as follows. Involved in the biosynthesis of the chorismate, which leads to the biosynthesis of aromatic amino acids. Catalyzes the reversible NADPH linked reduction of 3-dehydroshikimate (DHSA) to yield shikimate (SA). This is Shikimate dehydrogenase (NADP(+)) from Caldivirga maquilingensis (strain ATCC 700844 / DSM 13496 / JCM 10307 / IC-167).